We begin with the raw amino-acid sequence, 188 residues long: MAERANDIRPGQVLEHNGGLFLVVGIMHTQPGKGGAYIQAEMKNIKTGAKHYERFRSDATIRRAILDEEEYVYLFTEGNIVNLMHPSNYEQITINLDLLGEKKIYLQDNMKIKVVAYQDKIISAHVPDYVTLAVKETESVIKGQTATASYKPAILENGMRVNVPQFIKEEDKIVVYTPGDSYYERVKE.

It belongs to the elongation factor P family.

Its subcellular location is the cytoplasm. Its pathway is protein biosynthesis; polypeptide chain elongation. Its function is as follows. Involved in peptide bond synthesis. Stimulates efficient translation and peptide-bond synthesis on native or reconstituted 70S ribosomes in vitro. Probably functions indirectly by altering the affinity of the ribosome for aminoacyl-tRNA, thus increasing their reactivity as acceptors for peptidyl transferase. The sequence is that of Elongation factor P from Wolbachia pipientis wMel.